A 225-amino-acid chain; its full sequence is tRNA (guanine-N(1)-)-methyltransferase (225 aa).

S-adenosyl-L-methionine-binding positions include G110 and 130–135; that span reads VGDYVL.

It belongs to the RNA methyltransferase TrmD family. As to quaternary structure, homodimer.

It is found in the cytoplasm. The catalysed reaction is guanosine(37) in tRNA + S-adenosyl-L-methionine = N(1)-methylguanosine(37) in tRNA + S-adenosyl-L-homocysteine + H(+). In terms of biological role, specifically methylates guanosine-37 in various tRNAs. In Neorickettsia sennetsu (strain ATCC VR-367 / Miyayama) (Ehrlichia sennetsu), this protein is tRNA (guanine-N(1)-)-methyltransferase.